Consider the following 679-residue polypeptide: Enzymatic polyprotein (679 aa).

Positions 40–130 (LHCFVDTGAS…LYEPFIQFTD (91 aa)) are protease. Aspartate 45 is an active-site residue. The Reverse transcriptase domain occupies 272–452 (LKVIKPSKSP…KKINFLGLEI (181 aa)).

Belongs to the caulimoviridae enzymatic polyprotein family.

It carries out the reaction DNA(n) + a 2'-deoxyribonucleoside 5'-triphosphate = DNA(n+1) + diphosphate. Functionally, encodes for at least two polypeptides: protease (PR) and reverse transcriptase (RT). The protease processes the polyprotein in cis. Reverse transcriptase is multifunctional enzyme that converts the viral RNA genome into dsDNA in viral cytoplasmic capsids. This enzyme displays a DNA polymerase activity that can copy either DNA or RNA templates, and a ribonuclease H (RNase H) activity that cleaves the RNA strand of RNA-DNA heteroduplexes in a partially processive 3'- to 5'-endonucleasic mode. Neo-synthesized pregenomic RNA (pgRNA) are encapsidated, and reverse-transcribed inside the nucleocapsid. Partial (+)DNA is synthesized from the (-)DNA template and generates the relaxed circular DNA (RC-DNA) genome. After budding and infection, the RC-DNA migrates in the nucleus, and is converted into a plasmid-like covalently closed circular DNA (cccDNA). The sequence is that of Enzymatic polyprotein from Cauliflower mosaic virus (strain BBC) (CaMV).